The sequence spans 540 residues: Telomerase Cajal body protein 1 (540 aa).

Pro residues predominate over residues 1–10 (MKTPEAPPLA). A disordered region spans residues 1–126 (MKTPEAPPLA…GEDVEGVSEE (126 aa)). Ser-26, Ser-30, Ser-54, Ser-64, Ser-85, and Ser-90 each carry phosphoserine. A compositionally biased stretch (acidic residues) spans 116–126 (PGEDVEGVSEE). WD repeat units lie at residues 158–197 (QPEN…YNEG), 213–258 (EGDT…LRAS), 263–304 (NHLD…RDCE), 314–355 (GQSG…ALLG), 356–396 (GHQG…HPLW), and 402–441 (VTTN…LESK). Residue Thr-480 is modified to Phosphothreonine. The residue at position 482 (Ser-482) is a Phosphoserine. Residues 520-540 (SDAHQEEMGQGRTEGGGGEFT) form a disordered region. The span at 531–540 (RTEGGGGEFT) shows a compositional bias: gly residues.

Belongs to the TCAB1 family. Component of the telomerase holoenzyme complex composed of one molecule of TERT, one molecule of WRAP53/TCAB1, two molecules of H/ACA ribonucleoprotein complex subunits DKC1, NOP10, NHP2 and GAR1, and a telomerase RNA template component (TERC). The telomerase holoenzyme complex is associated with TEP1, SMG6/EST1A and POT1. Interacts with the chaperonin-containing T-complex (TRiC) complex; which mediates the folding of WRAP53/TCAB1. Interacts with COIL. Interacts with SMN1. Interacts with RNF8. Interacts with histone H2AX. In terms of processing, phosphorylated at Ser-64 by ATM in response to DNA damage, promoting its interaction with histone H2AX and localization to sites of DNA double-strand breaks.

It is found in the nucleus. The protein localises to the cajal body. Its subcellular location is the chromosome. The protein resides in the telomere. Its function is as follows. RNA chaperone that plays a key role in telomere maintenance and RNA localization to Cajal bodies. Specifically recognizes and binds the Cajal body box (CAB box) present in both small Cajal body RNAs (scaRNAs) and telomerase RNA template component (TERC). Essential component of the telomerase holoenzyme complex, a ribonucleoprotein complex essential for the replication of chromosome termini that elongates telomeres in most eukaryotes. In the telomerase holoenzyme complex, required to stimulate the catalytic activity of the complex. Acts by specifically binding the CAB box of the TERC RNA and controlling the folding of the CR4/CR5 region of the TERC RNA, a critical step for telomerase activity. In addition, also controls telomerase holoenzyme complex localization to Cajal body. During S phase, required for delivery of TERC to telomeres during S phase and for telomerase activity. In addition to its role in telomere maintenance, also required for Cajal body formation, probably by mediating localization of scaRNAs to Cajal bodies. Also plays a role in DNA repair: phosphorylated by ATM in response to DNA damage and relocalizes to sites of DNA double-strand breaks to promote the repair of DNA double-strand breaks. Acts by recruiting the ubiquitin ligase RNF8 to DNA breaks and promote both homologous recombination (HR) and non-homologous end joining (NHEJ). The polypeptide is Telomerase Cajal body protein 1 (Bos taurus (Bovine)).